The following is a 359-amino-acid chain: tRNA-specific 2-thiouridylase MnmA (359 aa).

ATP is bound by residues 6–13 (AMSGGVDS) and leucine 32. Cysteine 101 acts as the Nucleophile in catalysis. The cysteines at positions 101 and 193 are disulfide-linked. ATP is bound at residue glycine 125. Residues 143 to 145 (KDQ) form an interaction with tRNA region. Cysteine 193 serves as the catalytic Cysteine persulfide intermediate.

The protein belongs to the MnmA/TRMU family.

Its subcellular location is the cytoplasm. The enzyme catalyses S-sulfanyl-L-cysteinyl-[protein] + uridine(34) in tRNA + AH2 + ATP = 2-thiouridine(34) in tRNA + L-cysteinyl-[protein] + A + AMP + diphosphate + H(+). In terms of biological role, catalyzes the 2-thiolation of uridine at the wobble position (U34) of tRNA, leading to the formation of s(2)U34. The polypeptide is tRNA-specific 2-thiouridylase MnmA (Mycobacterium sp. (strain JLS)).